Reading from the N-terminus, the 558-residue chain is Xylulose kinase 2 (558 aa).

Substrate is bound by residues Asp16, 20-23 (QSMK), Ser111, and Asp283. Residues Thr305 and 456–460 (GASAN) contribute to the ATP site.

It belongs to the FGGY kinase family. A divalent metal cation serves as cofactor.

It localises to the cytoplasm. The enzyme catalyses D-xylulose + ATP = D-xylulose 5-phosphate + ADP + H(+). Its pathway is isoprenoid biosynthesis; carotenoid biosynthesis. With respect to regulation, repressed by oxo-clomazone (keto-clomazone), a bleaching herbicide. Its function is as follows. Mediates 1-deoxy-D-xylulose (DX) phosphorylation in the cytoplasm prior to the translocation of 1-deoxy-D-xylulose 5-phosphate into plastids. Can also phosphorylate D-xylulose (Xyl). Uses preferentially ATP as cosubstrate. The protein is Xylulose kinase 2 of Arabidopsis thaliana (Mouse-ear cress).